Consider the following 379-residue polypeptide: Cyclic di-GMP phosphodiesterase PdeB (379 aa).

The 197-residue stretch at 114-310 (FYKKQKKIFI…PLDFIVELND (197 aa)) folds into the HD-GYP domain.

Mn(2+) serves as cofactor.

The enzyme catalyses 3',3'-c-di-GMP + 2 H2O = 2 GMP + 2 H(+). In terms of biological role, phosphodiesterase (PDE) that catalyzes the hydrolysis of cyclic diguanylate (c-di-GMP) to GMP. This Borreliella burgdorferi (strain ATCC 35210 / DSM 4680 / CIP 102532 / B31) (Borrelia burgdorferi) protein is Cyclic di-GMP phosphodiesterase PdeB.